A 572-amino-acid chain; its full sequence is Transmembrane glycoprotein NMB (572 aa).

An N-terminal signal peptide occupies residues 1 to 22; that stretch reads MESLCGVLVFLLLAAGLPLQAA. Residues 23–500 lie on the Extracellular side of the membrane; the sequence is KRFRDVLGHE…DLGSPLRTVN (478 aa). N-linked (GlcNAc...) asparagine glycosylation is found at Asn-93, Asn-134, Asn-200, Asn-249, Asn-275, Asn-296, Asn-300, Asn-306, and Asn-312. The region spanning 251–338 is the PKD domain; the sequence is SDETFLRDLP…SPSSSTSPSP (88 aa). The interval 321 to 359 is disordered; that stretch reads GPCPSPTPSPSSSTSPSPASSPSPTLSTPSPSLMPTGHK. The segment covering 330–356 has biased composition (low complexity); it reads PSSSTSPSPASSPSPTLSTPSPSLMPT. 2 N-linked (GlcNAc...) asparagine glycosylation sites follow: Asn-461 and Asn-469. Residues 501–521 form a helical membrane-spanning segment; it reads GVLISIGCLAMFVTMVTILLY. Over 522–572 the chain is Cytoplasmic; sequence KKHKTYKPIGNCTRNVVKGKGLSVFLSHAKAPFSRGDREKDPLLQDKPWML. At Ser-544 the chain carries Phosphoserine. Residues 556–558 carry the Cell attachment site motif; the sequence is RGD.

This sequence belongs to the PMEL/NMB family.

It localises to the cell membrane. The protein resides in the melanosome membrane. The protein localises to the early endosome membrane. In terms of biological role, could be a melanogenic enzyme. This is Transmembrane glycoprotein NMB (Gpnmb) from Rattus norvegicus (Rat).